The chain runs to 507 residues: Carnosic acid synthase (507 aa).

The helical transmembrane segment at 6 to 23 (VFSLAFLAAWFIVVFPRW) threads the bilayer. Position 450 (C450) interacts with heme.

This sequence belongs to the cytochrome P450 family. Requires heme as cofactor. In terms of tissue distribution, expressed in glandular trichomes of young leaves.

It localises to the membrane. The catalysed reaction is 11-hydroxyferruginol + 3 reduced [NADPH--hemoprotein reductase] + 3 O2 = carnosate + 3 oxidized [NADPH--hemoprotein reductase] + 4 H2O + 4 H(+). It catalyses the reaction miltiradiene + 2 reduced [NADPH--hemoprotein reductase] + 2 O2 = miltiradien-20-al + 2 oxidized [NADPH--hemoprotein reductase] + 3 H2O + 2 H(+). The enzyme catalyses ferruginol + 3 reduced [NADPH--hemoprotein reductase] + 3 O2 = pisiferate + 3 oxidized [NADPH--hemoprotein reductase] + 4 H2O + 4 H(+). It participates in secondary metabolite biosynthesis; terpenoid biosynthesis. Functionally, monooxygenase involved in the biosynthesis of carnosate, a potent antioxidant labdane-related diterpene natural product. Catalyzes the oxidation of 11-hydroxyferruginol to produce carnosate. Mediates the conversion of miltiradien into miltiradien-20-al. Also involved in the production of pisiferic acid and derivative products from ferruginol. The protein is Carnosic acid synthase of Rosmarinus officinalis (Rosemary).